The chain runs to 359 residues: Small ribosomal subunit protein uS2 (359 aa).

Residues 232–295 (EPQFKPSEFT…PVGTEPVATT (64 aa)) are disordered. 2 stretches are compositionally biased toward basic and acidic residues: residues 239–250 (EFTRRDGDENRN) and 257–273 (DNRR…DTHY).

This sequence belongs to the universal ribosomal protein uS2 family.

The sequence is that of Small ribosomal subunit protein uS2 (rpsB) from Spiroplasma citri.